The following is a 358-amino-acid chain: Pseudouridylate synthase RPUSD4, mitochondrial (358 aa).

The transit peptide at 1–12 directs the protein to the mitochondrion; it reads MRHAREVTFARL.

The protein belongs to the pseudouridine synthase RluA family.

The protein localises to the mitochondrion matrix. The protein resides in the nucleus. Its subcellular location is the cytoplasm. The enzyme catalyses uridine in 5S rRNA = pseudouridine in 5S rRNA. It catalyses the reaction a uridine in tRNA = a pseudouridine in tRNA. It carries out the reaction a uridine in mRNA = a pseudouridine in mRNA. In terms of biological role, catalyzes uridine to pseudouridine isomerization (pseudouridylation) of different mitochondrial RNA substrates. Acts on position 1397 in 16S mitochondrial ribosomal RNA (16S mt-rRNA). This modification is required for the assembly of 16S mt-rRNA into a functional mitochondrial ribosome. Acts on position 39 in mitochondrial tRNA(Phe). Also catalyzes pseudouridylation of mRNAs in nucleus: acts as a regulator of pre-mRNA splicing by mediating pseudouridylation of pre-mRNAs at locations associated with alternatively spliced regions. Pseudouridylation of pre-mRNAs near splice sites directly regulates mRNA splicing and mRNA 3'-end processing. This chain is Pseudouridylate synthase RPUSD4, mitochondrial, found in Danio rerio (Zebrafish).